We begin with the raw amino-acid sequence, 251 residues long: Imidazole glycerol phosphate synthase subunit HisF (251 aa).

Residues aspartate 11 and aspartate 130 contribute to the active site.

It belongs to the HisA/HisF family. Heterodimer of HisH and HisF.

The protein localises to the cytoplasm. It carries out the reaction 5-[(5-phospho-1-deoxy-D-ribulos-1-ylimino)methylamino]-1-(5-phospho-beta-D-ribosyl)imidazole-4-carboxamide + L-glutamine = D-erythro-1-(imidazol-4-yl)glycerol 3-phosphate + 5-amino-1-(5-phospho-beta-D-ribosyl)imidazole-4-carboxamide + L-glutamate + H(+). It participates in amino-acid biosynthesis; L-histidine biosynthesis; L-histidine from 5-phospho-alpha-D-ribose 1-diphosphate: step 5/9. Functionally, IGPS catalyzes the conversion of PRFAR and glutamine to IGP, AICAR and glutamate. The HisF subunit catalyzes the cyclization activity that produces IGP and AICAR from PRFAR using the ammonia provided by the HisH subunit. In Natranaerobius thermophilus (strain ATCC BAA-1301 / DSM 18059 / JW/NM-WN-LF), this protein is Imidazole glycerol phosphate synthase subunit HisF.